Reading from the N-terminus, the 372-residue chain is Alpha-parvin (372 aa).

Positions 1–11 are enriched in low complexity; it reads MATSPQKSPSV. Residues 1-44 form a disordered region; the sequence is MATSPQKSPSVPKSPTPKSPPSRKKDDSFLGKLGGTLARRKKAK. Ala2 bears the N-acetylalanine mark. 3 positions are modified to phosphoserine: Ser8, Ser14, and Ser19. The segment at 21–25 is interaction with ARHGAP31; it reads PSRKK. Phosphoserine is present on residues Ser28 and Ser62. 2 Calponin-homology (CH) domains span residues 95-202 and 262-369; these read QELM…QYFR and NVVK…TKYR. The required for interaction with TESK1 and ILK stretch occupies residues 223-372; sequence GILQSRQIQE…NLFTKYRNVE (150 aa).

It belongs to the parvin family. In terms of assembly, component of the heterotrimeric IPP (ILK-PINCH-PARVIN) complex composed of ILK, LIMS1/PINCH and PARVA; the complex binds to F-actin via the C-terminal tail of LIMS1 and the N-terminal region of PARVA, promoting F-actin filament bundling. Interacts with TGFB1I1. Interacts with ARHGAP31. Interacts with the actin cytoskeleton. Interacts (via C-terminus) with TESK1 (via C-terminus); the interaction inhibits TESK1 kinase activity. Interacts with PXN/PAXILLIN (via LD motif 4). In terms of tissue distribution, widely expressed.

Its subcellular location is the cell junction. The protein resides in the focal adhesion. It localises to the cell membrane. The protein localises to the cytoplasm. It is found in the cytoskeleton. Its subcellular location is the myofibril. The protein resides in the sarcomere. It localises to the z line. Its function is as follows. Plays a role in sarcomere organization and in smooth muscle cell contraction. Required for normal development of the embryonic cardiovascular system, and for normal septation of the heart outflow tract. Plays a role in sprouting angiogenesis and is required for normal adhesion of vascular smooth muscle cells to endothelial cells during blood vessel development. Plays a role in the reorganization of the actin cytoskeleton, formation of lamellipodia and ciliogenesis. Plays a role in the establishment of cell polarity, cell adhesion, cell spreading, and directed cell migration. Within the IPP (ILK-PINCH-PARVIN) complex, binds to F-actin, promoting F-actin bundling, a process required to generate force for actin cytoskeleton reorganization and subsequent dynamic cell adhesion events such as cell spreading and migration. This Rattus norvegicus (Rat) protein is Alpha-parvin (Parva).